The primary structure comprises 398 residues: RNA exonuclease 3 (398 aa).

One can recognise an Exonuclease domain in the interval 239–385 (VLALDCEMGF…QDAIAAMDII (147 aa)).

It belongs to the REXO1/REXO3 family.

The protein localises to the cytoplasm. It localises to the nucleus. Functionally, 3' to 5' exoribonuclease required for proper 3' end maturation of MRP RNA and of the U5L snRNA. The sequence is that of RNA exonuclease 3 (REX3) from Candida glabrata (strain ATCC 2001 / BCRC 20586 / JCM 3761 / NBRC 0622 / NRRL Y-65 / CBS 138) (Yeast).